The following is a 926-amino-acid chain: G-protein coupled receptor family C group 6 member A (926 aa).

Positions 1-18 are cleaved as a signal peptide; that stretch reads MAFLIILITCFVIILATS. Residues 19 to 594 are Extracellular-facing; the sequence is QPCQTPDDFV…EYLNWNDSLA (576 aa). N-linked (GlcNAc...) asparagine glycans are attached at residues asparagine 121, asparagine 259, asparagine 332, asparagine 378, asparagine 452, asparagine 555, asparagine 567, and asparagine 590. Residues 595–615 traverse the membrane as a helical segment; it reads ILLLILSLLGIIFVLVVGIIF. At 616 to 631 the chain is on the cytoplasmic side; it reads TRNLNTPVVKSSGGLR. A helical transmembrane segment spans residues 632–652; the sequence is VCYVILLCHFLNFASTSFFIG. Residues 653–669 are Extracellular-facing; the sequence is EPQDFTCKTRQTMFGVS. The helical transmembrane segment at 670-690 threads the bilayer; that stretch reads FTLCISCILTKSLKILLAFSF. The Cytoplasmic portion of the chain corresponds to 691 to 704; the sequence is DPKLQKFLKCLYRP. The helical transmembrane segment at 705 to 725 threads the bilayer; sequence ILIIFTCTGIQVVICTLWLIF. At 726 to 748 the chain is on the extracellular side; that stretch reads AAPTVEVNVSLPRVIILECEEGS. Asparagine 733 carries an N-linked (GlcNAc...) asparagine glycan. Residues 749–769 form a helical membrane-spanning segment; it reads ILAFGTMLGYIAILAFICFIF. Residues 770–782 are Cytoplasmic-facing; the sequence is AFKGKYENYNEAK. Residues 783–803 traverse the membrane as a helical segment; it reads FITFGMLIYFIAWITFIPIYA. Residues 804–810 lie on the Extracellular side of the membrane; sequence TTFGKYV. Residues 811 to 831 form a helical membrane-spanning segment; it reads PAVEIIVILISNYGILYCTFI. Residues 832–926 lie on the Cytoplasmic side of the membrane; the sequence is PKCYVIICKQ…TLPRKRMSSI (95 aa).

This sequence belongs to the G-protein coupled receptor 3 family. Homodimer; disulfide-linked. As to expression, isoform 1 is expressed at high level in brain, skeletal muscle, testis, bone, calvaria, osteoblasts and leukocytes. Expressed at intermediate level in liver, heart, kidney and spleen. Expressed at low level in lung, pancreas, placenta and ovary. Not detected in thymus, prostate, small intestine, tongue and colon. Isoform 1 and isoform 2 are expressed in kidney at the same level. Isoform 2 is expressed at lower level than isoform 1 in the other tissues.

It is found in the cell membrane. Functionally, receptor activated by multiple ligands, including osteocalcin (BGLAP), basic amino acids, and various cations. Activated by amino acids with a preference for basic amino acids such as L-Lys, L-Arg and L-ornithine but also by small and polar amino acids. The L-alpha amino acids respond is augmented by divalent cations Ca(2+) and Mg(2+). Seems to act through a G(q)/G(11) and G(i)-coupled pathway. Regulates testosterone production by acting as a ligand for uncarboxylated osteocalcin hormone: osteocalcin-binding at the surface of Leydig cells initiates a signaling response that promotes the expression of enzymes required for testosterone synthesis in a CREB-dependent manner. Mediates the non-genomic effects of androgens in multiple tissue. May coordinate nutritional and hormonal anabolic signals through the sensing of extracellular amino acids, osteocalcin, divalent ions and its responsiveness to anabolic steroids. In Homo sapiens (Human), this protein is G-protein coupled receptor family C group 6 member A (GPRC6A).